Reading from the N-terminus, the 259-residue chain is Hydroxyethylthiazole kinase (259 aa).

Met38 lines the substrate pocket. 2 residues coordinate ATP: Arg113 and Ser158. Gly185 is a binding site for substrate.

The protein belongs to the Thz kinase family. Mg(2+) serves as cofactor.

It carries out the reaction 5-(2-hydroxyethyl)-4-methylthiazole + ATP = 4-methyl-5-(2-phosphooxyethyl)-thiazole + ADP + H(+). It participates in cofactor biosynthesis; thiamine diphosphate biosynthesis; 4-methyl-5-(2-phosphoethyl)-thiazole from 5-(2-hydroxyethyl)-4-methylthiazole: step 1/1. Its function is as follows. Catalyzes the phosphorylation of the hydroxyl group of 4-methyl-5-beta-hydroxyethylthiazole (THZ). The sequence is that of Hydroxyethylthiazole kinase from Leuconostoc citreum (strain KM20).